Here is a 382-residue protein sequence, read N- to C-terminus: Galactokinase (382 aa).

34–37 (EHTD) contacts substrate. Position 124–130 (124–130 (GAGLSSS)) interacts with ATP. Mg(2+)-binding residues include Ser130 and Glu162. The active-site Proton acceptor is the Asp174. Tyr223 contacts substrate.

Belongs to the GHMP kinase family. GalK subfamily.

The protein localises to the cytoplasm. The catalysed reaction is alpha-D-galactose + ATP = alpha-D-galactose 1-phosphate + ADP + H(+). It functions in the pathway carbohydrate metabolism; galactose metabolism. Catalyzes the transfer of the gamma-phosphate of ATP to D-galactose to form alpha-D-galactose-1-phosphate (Gal-1-P). In Salmonella paratyphi A (strain ATCC 9150 / SARB42), this protein is Galactokinase.